We begin with the raw amino-acid sequence, 462 residues long: Argininosuccinate lyase (462 aa).

The protein belongs to the lyase 1 family. Argininosuccinate lyase subfamily.

It localises to the cytoplasm. It catalyses the reaction 2-(N(omega)-L-arginino)succinate = fumarate + L-arginine. It participates in amino-acid biosynthesis; L-arginine biosynthesis; L-arginine from L-ornithine and carbamoyl phosphate: step 3/3. In Nitratiruptor sp. (strain SB155-2), this protein is Argininosuccinate lyase.